We begin with the raw amino-acid sequence, 199 residues long: Recombination protein RecR (199 aa).

The C4-type zinc-finger motif lies at 58 to 73; the sequence is CRICYNITDTEVCNIC. The Toprim domain occupies 81-176; it reads SLICVVSHPM…KVTRIAHGVP (96 aa).

Belongs to the RecR family.

Functionally, may play a role in DNA repair. It seems to be involved in an RecBC-independent recombinational process of DNA repair. It may act with RecF and RecO. The sequence is that of Recombination protein RecR from Thermoanaerobacter pseudethanolicus (strain ATCC 33223 / 39E) (Clostridium thermohydrosulfuricum).